The chain runs to 579 residues: MAGVLAGECSYSESGVSSHSRNSHEKQEEVSRWYFGRKEIEENSPSRLDGIDLKKETYLRKSYCTFLQDLGMRLKVPQVTIATAIIFCHRFFFRQSHAKNDRRTIATVCMFLAGKVEETPRPLKDVIFVSYEIINKKDPGASQKIKQKEVYEQQKELILNGEKIVLSTLGFDLNVYHPYKPLVEAIKKFKVAQNALAQVAWNFVNDGLRTSLCLQFKPHHIAAGAIFLAAKFLKVKLPSDGEKVWWQEFDVTPRQLEDVSNQMLELYEQNRVPASQGSEVESSVGGGSAQRPGSRNAVSTDEHVGSRQTSSVRSTHEQSNSDNHGGSSKGVLNQNNENGGGEAANVSVDNKEEIERETKESSLHLESHPAHKDNVREAPHNSRPLVEGPGKDNSEREGGELQDDGAVHKSRNVDVGDALISQSPKDLKLLRDKVKAKREKAKKLLGERTRKKDLMDEDDLIERELEDVQLAVEDEKTKERKVQSRPKAENSDLMGTEHGEILDVKGEVKNTEEGEMVNNNVSPMMHSRKRKMGSPPEKQSEGKRRHNSENGEESHKTSRGSSHHGDREHRRHSQENNHS.

Disordered stretches follow at residues 1–27 (MAGV…HEKQ) and 271–419 (RVPA…GDAL). The span at 11-20 (YSESGVSSHS) shows a compositional bias: polar residues. A compositionally biased stretch (low complexity) spans 274-283 (ASQGSEVESS). Over residues 306–334 (SRQTSSVRSTHEQSNSDNHGGSSKGVLNQ) the composition is skewed to polar residues. Composition is skewed to basic and acidic residues over residues 349 to 380 (DNKE…EAPH) and 389 to 414 (PGKD…RNVD). Serine 423 is subject to Phosphoserine. 3 stretches are compositionally biased toward basic and acidic residues: residues 474-512 (DEKT…KNTE), 538-556 (KQSE…ESHK), and 563-579 (HHGD…NNHS). Positions 474-579 (DEKTKERKVQ…RRHSQENNHS (106 aa)) are disordered.

The protein belongs to the cyclin family. Cyclin T subfamily.

The protein is Cyclin-T1-5 (CYCT1-5) of Arabidopsis thaliana (Mouse-ear cress).